Consider the following 952-residue polypeptide: Glycine dehydrogenase (decarboxylating) (952 aa).

N6-(pyridoxal phosphate)lysine is present on Lys696.

Belongs to the GcvP family. In terms of assembly, the glycine cleavage system is composed of four proteins: P, T, L and H. It depends on pyridoxal 5'-phosphate as a cofactor.

It carries out the reaction N(6)-[(R)-lipoyl]-L-lysyl-[glycine-cleavage complex H protein] + glycine + H(+) = N(6)-[(R)-S(8)-aminomethyldihydrolipoyl]-L-lysyl-[glycine-cleavage complex H protein] + CO2. The glycine cleavage system catalyzes the degradation of glycine. The P protein binds the alpha-amino group of glycine through its pyridoxal phosphate cofactor; CO(2) is released and the remaining methylamine moiety is then transferred to the lipoamide cofactor of the H protein. This Pelagibacter ubique (strain HTCC1062) protein is Glycine dehydrogenase (decarboxylating).